Reading from the N-terminus, the 659-residue chain is MSEQKKSSKIIGIDLGTTNSCVSVMEGGQAKVIVSSEGTRTTPSIVAFKGNETLVGIPAKRQAVTNPAKTLASTKRFIGRKYSEVESEIKTVPYQVASGSNGDVVFPIDGKQFTPEEIGAQVLIKMKETAEAYLGEPVTEAVITVPAYFNDSQRASTKDAGRIAGLDVKRIIPEPTAAALAYGIDKAGDKKIAVFDLGGGTFDISILEIGDGVFEVLSTNGDTHLGGDDFDEVIIKWMIEEFQKQEGIDLSKDNMALQRLKDAAEKAKIELSGMSSTEINQPFITMDANGPKHLTLTLTRAHFEKLASNLIERTKAPCQKALADAKLAASDIDDVLLVGGMSRMPAVQEVVKSIFGKEPNKGVNPDEVVAIGAAIQGGVLGGEVKDVLLLDVIPLSLGIETLGGVMTPLVERNTTIPTQKKQIFSTAADNQPAVTIVVLQGERPMAKDNKEIGRFDLTDIPPAPRGHPQIEVTFDIDANGILHVSAKDAASGREQKIRIEASSGLKEDEIQRMINDAEKNKEEDKKRREASDVRNEADSMIFRAEKAISDYKENIPESLTKEIEERIEKVRSALKEDAPTEKIKEASDELSRHMQKIGEAMQSQSASAAANAQDGPNINTEDLKKHSFSTKPPTGNSSSSANNENIEEADVEIVDKPND.

T201 carries the post-translational modification Phosphothreonine; by autocatalysis. Over residues 571–592 the composition is skewed to basic and acidic residues; that stretch reads RSALKEDAPTEKIKEASDELSR. The interval 571 to 659 is disordered; the sequence is RSALKEDAPT…DVEIVDKPND (89 aa). Residues 600 to 613 are compositionally biased toward low complexity; the sequence is AMQSQSASAAANAQ.

The protein belongs to the heat shock protein 70 family.

Acts as a chaperone. This Chlamydia abortus (strain DSM 27085 / S26/3) (Chlamydophila abortus) protein is Chaperone protein DnaK.